A 148-amino-acid chain; its full sequence is Large ribosomal subunit protein bL9 (148 aa).

This sequence belongs to the bacterial ribosomal protein bL9 family.

Binds to the 23S rRNA. In Oceanobacillus iheyensis (strain DSM 14371 / CIP 107618 / JCM 11309 / KCTC 3954 / HTE831), this protein is Large ribosomal subunit protein bL9.